The primary structure comprises 168 residues: MNDLLSRAMRLLSQRDHSEAELRRKLAAQPFMAKARFGTKTPSSSAPLPEEPVDPAVIEQVIAYCYQHNWLDDQRFARSYIGSRSRKGYGAQRIRSELMQKGVDKELTQAALADCEIDWCEQAKQVAQRKFGDQLPTDWKEKAKVQRYLLYRGFFQEEIQSIYRDFAQ.

Belongs to the RecX family.

The protein resides in the cytoplasm. Modulates RecA activity. In Serratia proteamaculans (strain 568), this protein is Regulatory protein RecX.